The sequence spans 336 residues: Potassium channel subfamily K member 1 (336 aa).

At 1 to 20 (MLQSLAGSSCVRLVERHRSA) the chain is on the cytoplasmic side. A helical transmembrane segment spans residues 21-41 (WCFGFLVLGYLLYLVFGAVVF). The Extracellular segment spans residues 42-103 (SSVELPYEDL…SNASGNWNWD (62 aa)). Residue asparagine 95 is glycosylated (N-linked (GlcNAc...) asparagine). The segment at residues 104–116 (FTSALFFASTVLS) is an intramembrane region (helical). An intramembrane segment occupies 117 to 122 (TTGYGH). The selectivity filter 1 stretch occupies residues 117–122 (TTGYGH). The Extracellular portion of the chain corresponds to 123–132 (TVPLSDGGKA). The chain crosses the membrane as a helical span at residues 133 to 156 (FCIIYSVIGIPFTLLFLTAVVQRV). The Cytoplasmic segment spans residues 157-181 (TVHVTRRPVLYFHIRWGFSKQVVAI). A helical transmembrane segment spans residues 182 to 202 (VHAVLLGFVTVSCFFFIPAAV). Topologically, residues 203–211 (FSVLEDDWN) are extracellular. The segment at residues 212 to 224 (FLESFYFCFISLS) is an intramembrane region (helical). A selectivity filter 2 region spans residues 225-230 (TIGLGD). The stretch at 225–231 (TIGLGDY) is an intramembrane region. Residues 232 to 243 (VPGEGYNQKFRE) are Extracellular-facing. A helical membrane pass occupies residues 244 to 267 (LYKIGITCYLLLGLIAMLVVLETF). The Cytoplasmic portion of the chain corresponds to 268–336 (CELHELKKFR…PPYEDGSANH (69 aa)). Lysine 274 participates in a covalent cross-link: Glycyl lysine isopeptide (Lys-Gly) (interchain with G-Cter in SUMO). The important for intracellular retention in recycling endosomes stretch occupies residues 293 to 299 (IMEHDQL). Residues 310-336 (GLKEEQKQNEPFVASQSPPYEDGSANH) form a disordered region. At serine 326 the chain carries Phosphoserine.

This sequence belongs to the two pore domain potassium channel (TC 1.A.1.8) family. In terms of assembly, homodimer; disulfide-linked. Heterodimer with KCNK2; disulfide-linked. In astrocytes, forms mostly heterodimeric potassium channels with KCNK2, with only a minor proportion of functional channels containing homodimeric KCNK1. Interacts with KCNK3 and KCNK9, forming functional heterodimeric channels. Interacts with GNG4. Identified in a complex with PSD and ARF6; interacts only with PSD that is bound to ARF6. Interacts with UBE2I. In terms of processing, sumoylation is controversial. Sumoylated by UBE2I. Not sumoylated when expressed in xenopus oocytes or mammalian cells. Sumoylation inactivates the channel, but does not interfere with expression at the cell membrane. Sumoylation of a single subunit is sufficient to silence the dimeric channel. Sumoylation of KCNK1 is sufficient to silence heterodimeric channels formed by KCNK1 and KCNK3 or KCNK9. Desumoylated by SENP1; this activates the channel. Desumoylated by SENP1; this strongly increases halothane-mediated activation of heterodimeric channels formed with KCNK9. SENP1 treatment has no effect. Detected in brain and in kidney cortex and medulla, especially at the renal brush border membranes of the proximal convoluted tubules, in distal tubules and on intercalated cells of the collecting duct. Detected in cerebellum granule neurons. Detected in astrocytes in hippocampus stratum radiatum. Highly expressed in the stria vascularis in the cochlea. Detected in neurons in Scarpa's ganglion in the inner ear, at nerve terminals in the crista ampullaris, in supporting cells and dark cells, but not in hair cells (at protein level). Detected in the brain cerebellar granule cell layer, amygdala, thalamus reticular nucleus, habenula, mesencephalic trigeminal neurons, neocortex and piriform cortex, and at lower levels in the olfactory bulb. Detected in Scarpa's ganglia and crista ampullaris in the inner ear.

The protein localises to the cell membrane. It localises to the recycling endosome. Its subcellular location is the apical cell membrane. It is found in the cytoplasmic vesicle. The protein resides in the perikaryon. The protein localises to the cell projection. It localises to the dendrite. Its subcellular location is the synaptic cell membrane. The enzyme catalyses K(+)(in) = K(+)(out). The catalysed reaction is NH4(+)(in) = NH4(+)(out). It catalyses the reaction Na(+)(in) = Na(+)(out). It carries out the reaction Rb(+)(in) = Rb(+)(out). The enzyme catalyses Cs(+)(in) = Cs(+)(out). The catalysed reaction is Li(+)(in) = Li(+)(out). It catalyses the reaction L-glutamate(out) = L-glutamate(in). It carries out the reaction chloride(in) = chloride(out). Its activity is regulated as follows. Inhibited by 100 uM quinine. Slightly inhibited by Ba(+). Activity is first increased and then decreased when the extracellular pH is lowered to 6.0. Ion channel that contributes to passive transmembrane potassium transport and to the regulation of the resting membrane potential in brain astrocytes, but also in kidney and in other tissues. Forms dimeric channels through which potassium ions pass in accordance with their electrochemical gradient. The channel is selective for K(+) ions at physiological potassium concentrations and at neutral pH, but becomes permeable to Na(+) at subphysiological K(+) levels and upon acidification of the extracellular medium. The homodimer has very low potassium channel activity, when expressed in heterologous systems, and can function as weakly inward rectifying potassium channel. Channel activity is modulated by activation of serotonin receptors. Heterodimeric channels containing KCNK1 and KCNK2 have much higher activity, and may represent the predominant form in astrocytes. Heterodimeric channels containing KCNK1 and KCNK3 or KCNK9 have much higher activity. Heterodimeric channels formed by KCNK1 and KCNK9 may contribute to halothane-sensitive currents. Mediates outward rectifying potassium currents in dentate gyrus granule cells and contributes to the regulation of their resting membrane potential. Contributes to the regulation of action potential firing in dentate gyrus granule cells and down-regulates their intrinsic excitability. Contributes to the regulation of the resting membrane potential of pancreatic beta cells. In astrocytes, the heterodimer formed by KCNK1 and KCNK2 is required for rapid glutamate release in response to activation of G-protein coupled receptors, such as F2R and CNR1. Required for normal ion and water transport in the kidney. The low channel activity of homodimeric KCNK1 may be due to sumoylation. The low channel activity may be due to rapid internalization from the cell membrane and retention in recycling endosomes. Permeable to monovalent cations with ion selectivity for K(+) &gt; Rb(+) &gt;&gt; NH4(+) &gt;&gt; Cs(+) = Na(+) = Li(+). The chain is Potassium channel subfamily K member 1 from Rattus norvegicus (Rat).